The primary structure comprises 285 residues: Energy-coupling factor transporter ATP-binding protein EcfA2 (285 aa).

The ABC transporter domain maps to 3-245 (IKIENLNHIY…VETLEKIGLA (243 aa)). 40–47 (GHTGSGKS) is a binding site for ATP.

Belongs to the ABC transporter superfamily. Energy-coupling factor EcfA family. Forms a stable energy-coupling factor (ECF) transporter complex composed of 2 membrane-embedded substrate-binding proteins (S component), 2 ATP-binding proteins (A component) and 2 transmembrane proteins (T component).

The protein resides in the cell membrane. Functionally, ATP-binding (A) component of a common energy-coupling factor (ECF) ABC-transporter complex. Unlike classic ABC transporters this ECF transporter provides the energy necessary to transport a number of different substrates. This chain is Energy-coupling factor transporter ATP-binding protein EcfA2, found in Clostridium perfringens (strain 13 / Type A).